A 141-amino-acid chain; its full sequence is Large ribosomal subunit protein uL11 (141 aa).

The protein belongs to the universal ribosomal protein uL11 family. Part of the ribosomal stalk of the 50S ribosomal subunit. Interacts with L10 and the large rRNA to form the base of the stalk. L10 forms an elongated spine to which L12 dimers bind in a sequential fashion forming a multimeric L10(L12)X complex. In terms of processing, one or more lysine residues are methylated.

Functionally, forms part of the ribosomal stalk which helps the ribosome interact with GTP-bound translation factors. The polypeptide is Large ribosomal subunit protein uL11 (Clostridioides difficile (strain 630) (Peptoclostridium difficile)).